Consider the following 340-residue polypeptide: Latency-related protein 1 (340 aa).

Disordered regions lie at residues 13–96 (AALW…PNRQ) and 254–340 (RLPG…PPRP). 2 consecutive repeat copies span residues 27-43 (PTPT…PRTP) and 59-75 (PTPT…PRTP). Residues 27-75 (PTPTHPHSHAPPLPRTPTPSHPHSRAPPLPRAPTPTHPHSHAPPLPRTP) form a 2 X 17 AA repeats region. Over residues 35-73 (HAPPLPRTPTPSHPHSRAPPLPRAPTPTHPHSHAPPLPR) the composition is skewed to pro residues. Residues 287 to 307 (ARGGGSGGGRGPGGGRGGPRG) show a composition bias toward gly residues. A compositionally biased stretch (basic residues) spans 308 to 326 (SRGRGGRGRGGRGGGRRGR).

The chain is Latency-related protein 1 from Human herpesvirus 1 (strain F) (HHV-1).